A 566-amino-acid polypeptide reads, in one-letter code: Acetyl-coenzyme A carboxylase carboxyl transferase subunits beta/alpha (566 aa).

An acetyl-coenzyme A carboxylase carboxyl transferase subunit beta region spans residues 1-243; the sequence is MNPTTPRGGQ…QTAEFLLRHG (243 aa). Residues 11 to 280 form the CoA carboxyltransferase N-terminal domain; the sequence is LWSRCGGCAS…PVGAGHESEC (270 aa). The tract at residues 11-534 is carboxyltransferase; sequence LWSRCGGCAS…REAVLAHLVP (524 aa). Positions 15, 18, 34, and 37 each coordinate Zn(2+). Positions 244-557 are acetyl-coenzyme A carboxylase carboxyl transferase subunit alpha; sequence QVDLVVPRHA…RRRFRRFGAA (314 aa). The tract at residues 268-295 is disordered; it reads GREPVGAGHESECPPVDGSSTQERGADK. The 253-residue stretch at 282–534 folds into the CoA carboxyltransferase C-terminal domain; the sequence is PVDGSSTQER…REAVLAHLVP (253 aa).

It in the N-terminal section; belongs to the AccD/PCCB family. This sequence in the C-terminal section; belongs to the AccA family. Acetyl-CoA carboxylase is a heterotetramer composed of biotin carboxyl carrier protein (AccB), biotin carboxylase (AccC) and two subunits of ACCase subunit beta/alpha. Requires Zn(2+) as cofactor.

It localises to the cytoplasm. The enzyme catalyses N(6)-carboxybiotinyl-L-lysyl-[protein] + acetyl-CoA = N(6)-biotinyl-L-lysyl-[protein] + malonyl-CoA. Its pathway is lipid metabolism; malonyl-CoA biosynthesis; malonyl-CoA from acetyl-CoA: step 1/1. Its function is as follows. Component of the acetyl coenzyme A carboxylase (ACC) complex. Biotin carboxylase (BC) catalyzes the carboxylation of biotin on its carrier protein (BCCP) and then the CO(2) group is transferred by the transcarboxylase to acetyl-CoA to form malonyl-CoA. The sequence is that of Acetyl-coenzyme A carboxylase carboxyl transferase subunits beta/alpha (accD) from Salinispora tropica (strain ATCC BAA-916 / DSM 44818 / JCM 13857 / NBRC 105044 / CNB-440).